We begin with the raw amino-acid sequence, 958 residues long: Valine--tRNA ligase (958 aa).

A 'HIGH' region motif is present at residues proline 42 to histidine 52. The 'KMSKS' region motif lies at lysine 554–serine 558. Position 557 (lysine 557) interacts with ATP. A coiled-coil region spans residues leucine 887–leucine 956.

Belongs to the class-I aminoacyl-tRNA synthetase family. ValS type 1 subfamily. In terms of assembly, monomer.

It localises to the cytoplasm. It catalyses the reaction tRNA(Val) + L-valine + ATP = L-valyl-tRNA(Val) + AMP + diphosphate. Its function is as follows. Catalyzes the attachment of valine to tRNA(Val). As ValRS can inadvertently accommodate and process structurally similar amino acids such as threonine, to avoid such errors, it has a 'posttransfer' editing activity that hydrolyzes mischarged Thr-tRNA(Val) in a tRNA-dependent manner. In Shewanella oneidensis (strain ATCC 700550 / JCM 31522 / CIP 106686 / LMG 19005 / NCIMB 14063 / MR-1), this protein is Valine--tRNA ligase.